A 306-amino-acid polypeptide reads, in one-letter code: Curved DNA-binding protein (306 aa).

The J domain maps to 5–69 (DYYAIMGVKP…QRRAEYDQLW (65 aa)).

The protein localises to the cytoplasm. Its subcellular location is the nucleoid. Functionally, DNA-binding protein that preferentially recognizes a curved DNA sequence. It is probably a functional analog of DnaJ; displays overlapping activities with DnaJ, but functions under different conditions, probably acting as a molecular chaperone in an adaptive response to environmental stresses other than heat shock. Lacks autonomous chaperone activity; binds native substrates and targets them for recognition by DnaK. Its activity is inhibited by the binding of CbpM. The polypeptide is Curved DNA-binding protein (Salmonella arizonae (strain ATCC BAA-731 / CDC346-86 / RSK2980)).